The primary structure comprises 555 residues: Glutamine--tRNA ligase (555 aa).

Residues 34-44 (PEPNGFLHIGH) carry the 'HIGH' region motif. ATP is bound by residues 35-37 (EPN) and 41-47 (HIGHAKS). Residues D67 and Y212 each contribute to the L-glutamine site. ATP-binding positions include T231, 261–262 (RL), and 269–271 (LSK). The 'KMSKS' region signature appears at 268 to 272 (VLSKR).

This sequence belongs to the class-I aminoacyl-tRNA synthetase family. In terms of assembly, monomer.

It localises to the cytoplasm. The catalysed reaction is tRNA(Gln) + L-glutamine + ATP = L-glutaminyl-tRNA(Gln) + AMP + diphosphate. The chain is Glutamine--tRNA ligase from Alteromonas mediterranea (strain DSM 17117 / CIP 110805 / LMG 28347 / Deep ecotype).